A 64-amino-acid polypeptide reads, in one-letter code: MFTLKKSLLLLFFLGTINLSLCEQERNAEEERRDEPDERNAEVEKRFFPIVGKLLFGLSGLLGK.

The N-terminal stretch at 1–22 (MFTLKKSLLLLFFLGTINLSLC) is a signal peptide. Residues 23–47 (EQERNAEEERRDEPDERNAEVEKRF) constitute a propeptide that is removed on maturation. Residue Leu-62 is modified to Leucine amide.

In terms of tissue distribution, expressed by the skin glands.

It localises to the secreted. In terms of biological role, antimicrobial peptide with activity against Gram-positive and Gram-negative bacteria and against fungi. Has been tested against S.aureus (MIC=1.25 ug/mL), B.pumilus (MIC=5.0 ug/mL), B.cereus (MIC=15.0 ug/mL), E.coli (MIC=1.25 ug/mL), B.dysenteriae (MIC=5.0 ug/mL), A.cacoaceticus (MIC=15.0 ug/mL), P.aeruginosa (MIC=5.0 ug/mL) and C.albicans (MIC=1.25 ug/mL). Also shows a weak hemolytic activity. The protein is Temporin-ALe of Amolops loloensis (Lolokou Sucker Frog).